We begin with the raw amino-acid sequence, 513 residues long: ATP synthase subunit alpha (513 aa).

G169–T176 contacts ATP.

The protein belongs to the ATPase alpha/beta chains family. In terms of assembly, F-type ATPases have 2 components, CF(1) - the catalytic core - and CF(0) - the membrane proton channel. CF(1) has five subunits: alpha(3), beta(3), gamma(1), delta(1), epsilon(1). CF(0) has three main subunits: a(1), b(2) and c(9-12). The alpha and beta chains form an alternating ring which encloses part of the gamma chain. CF(1) is attached to CF(0) by a central stalk formed by the gamma and epsilon chains, while a peripheral stalk is formed by the delta and b chains.

Its subcellular location is the cell inner membrane. The enzyme catalyses ATP + H2O + 4 H(+)(in) = ADP + phosphate + 5 H(+)(out). Functionally, produces ATP from ADP in the presence of a proton gradient across the membrane. The alpha chain is a regulatory subunit. The chain is ATP synthase subunit alpha from Ruthia magnifica subsp. Calyptogena magnifica.